A 244-amino-acid chain; its full sequence is Mono-ADP-ribosyltransferase C3 (244 aa).

An N-terminal signal peptide occupies residues M1–G40. The region spanning D44–K244 is the TR mART core domain. NAD(+) contacts are provided by residues T80, N87, R91, R128–D131, and R167–E169. R128 is an active-site residue. Residue S174 is part of the active site. Residues F182–R185 and Q211–E213 contribute to the NAD(+) site. The active site involves E213.

To exoenzymes 3 of C.limosum and C.botulinum D phage, and to S.aureus ediN. Monomer.

It localises to the secreted. It carries out the reaction L-asparaginyl-[protein] + NAD(+) = N(4)-(ADP-D-ribosyl)-L-asparaginyl-[protein] + nicotinamide + H(+). Functionally, ADP-ribosylates eukaryotic Rho and Rac proteins on an asparagine residue. This chain is Mono-ADP-ribosyltransferase C3, found in Clostridium botulinum C phage (Clostridium botulinum C bacteriophage).